The chain runs to 210 residues: Ribonuclease HII (210 aa).

The RNase H type-2 domain maps to 17 to 206; it reads DIICGVDEAG…VRALLGGVTP (190 aa). Residues Asp23, Glu24, and Asp115 each coordinate a divalent metal cation.

The protein belongs to the RNase HII family. The cofactor is Mn(2+). Mg(2+) serves as cofactor.

The protein localises to the cytoplasm. It carries out the reaction Endonucleolytic cleavage to 5'-phosphomonoester.. Endonuclease that specifically degrades the RNA of RNA-DNA hybrids. The chain is Ribonuclease HII from Janthinobacterium sp. (strain Marseille) (Minibacterium massiliensis).